The following is a 354-amino-acid chain: mRNA cap guanine-N(7) methyltransferase 2 (354 aa).

The region spanning 8 to 286 (KPEQSHHRLF…LYATFIFQKP (279 aa)) is the mRNA cap 0 methyltransferase domain. Residues Lys-21, Asp-61, and 88 to 89 (DP) contribute to the S-adenosyl-L-methionine site.

This sequence belongs to the class I-like SAM-binding methyltransferase superfamily. mRNA cap 0 methyltransferase family.

It is found in the nucleus. The catalysed reaction is a 5'-end (5'-triphosphoguanosine)-ribonucleoside in mRNA + S-adenosyl-L-methionine = a 5'-end (N(7)-methyl 5'-triphosphoguanosine)-ribonucleoside in mRNA + S-adenosyl-L-homocysteine. In terms of biological role, mRNA capping methyltransferase that methylates the N7 position of the added guanosine to the 5'-cap structure of mRNAs. Binds RNA containing 5'-terminal GpppC. This is mRNA cap guanine-N(7) methyltransferase 2 from Arabidopsis thaliana (Mouse-ear cress).